The chain runs to 466 residues: Cysteine--tRNA ligase (466 aa).

Cys-28 provides a ligand contact to Zn(2+). The 'HIGH' region motif lies at 30-40; sequence PTVYNYIHIGN. Zn(2+)-binding residues include Cys-208, His-233, and Glu-237. The 'KMSKS' region signature appears at 265-269; that stretch reads KMSKS. An ATP-binding site is contributed by Lys-268.

The protein belongs to the class-I aminoacyl-tRNA synthetase family. Monomer. Zn(2+) is required as a cofactor.

It is found in the cytoplasm. It catalyses the reaction tRNA(Cys) + L-cysteine + ATP = L-cysteinyl-tRNA(Cys) + AMP + diphosphate. The polypeptide is Cysteine--tRNA ligase (Staphylococcus aureus (strain USA300)).